The sequence spans 412 residues: Transcription termination factor 3, mitochondrial (412 aa).

A mitochondrion-targeting transit peptide spans 1–67 (MALLAQQLPR…IKTYRTLFWN (67 aa)).

It belongs to the mTERF family.

The protein localises to the mitochondrion. Functionally, binds promoter DNA and regulates initiation of transcription. Required for normal mitochondrial transcription and translation, and for normal assembly of mitochondrial respiratory complexes. Required for normal mitochondrial function. Maintains 16S rRNA levels and functions in mitochondrial ribosome assembly by regulating the biogenesis of the 39S ribosomal subunit. This Mus musculus (Mouse) protein is Transcription termination factor 3, mitochondrial (Mterf3).